We begin with the raw amino-acid sequence, 162 residues long: Probable chemoreceptor glutamine deamidase CheD (162 aa).

This sequence belongs to the CheD family.

The catalysed reaction is L-glutaminyl-[protein] + H2O = L-glutamyl-[protein] + NH4(+). Functionally, probably deamidates glutamine residues to glutamate on methyl-accepting chemotaxis receptors (MCPs), playing an important role in chemotaxis. The chain is Probable chemoreceptor glutamine deamidase CheD from Clostridium botulinum (strain Eklund 17B / Type B).